We begin with the raw amino-acid sequence, 448 residues long: UDP-N-acetylmuramoylalanine--D-glutamate ligase (448 aa).

112 to 118 (GSNAKST) contributes to the ATP binding site.

It belongs to the MurCDEF family.

The protein localises to the cytoplasm. The catalysed reaction is UDP-N-acetyl-alpha-D-muramoyl-L-alanine + D-glutamate + ATP = UDP-N-acetyl-alpha-D-muramoyl-L-alanyl-D-glutamate + ADP + phosphate + H(+). It participates in cell wall biogenesis; peptidoglycan biosynthesis. Functionally, cell wall formation. Catalyzes the addition of glutamate to the nucleotide precursor UDP-N-acetylmuramoyl-L-alanine (UMA). This Acinetobacter baumannii (strain AB307-0294) protein is UDP-N-acetylmuramoylalanine--D-glutamate ligase.